The primary structure comprises 189 residues: Glycerol-3-phosphate acyltransferase (189 aa).

The next 5 helical transmembrane spans lie at 1–21 (MVWL…AVLL), 50–70 (KLAI…VLVA), 72–92 (WLGL…IGHL), 111–131 (MLLG…LLTF), and 151–171 (LLAW…ALIV).

The protein belongs to the PlsY family. As to quaternary structure, probably interacts with PlsX.

It is found in the cell inner membrane. It carries out the reaction an acyl phosphate + sn-glycerol 3-phosphate = a 1-acyl-sn-glycero-3-phosphate + phosphate. It functions in the pathway lipid metabolism; phospholipid metabolism. Catalyzes the transfer of an acyl group from acyl-phosphate (acyl-PO(4)) to glycerol-3-phosphate (G3P) to form lysophosphatidic acid (LPA). This enzyme utilizes acyl-phosphate as fatty acyl donor, but not acyl-CoA or acyl-ACP. In Pseudomonas paraeruginosa (strain DSM 24068 / PA7) (Pseudomonas aeruginosa (strain PA7)), this protein is Glycerol-3-phosphate acyltransferase.